We begin with the raw amino-acid sequence, 157 residues long: Electron transfer flavoprotein regulatory factor 1 homolog (157 aa).

Belongs to the complex I LYR family.

Its subcellular location is the mitochondrion. The protein is Electron transfer flavoprotein regulatory factor 1 homolog of Dictyostelium discoideum (Social amoeba).